A 533-amino-acid chain; its full sequence is Multicopy suppressor of sporulation protein msa1 (533 aa).

Positions 30–68 (DIPPGSLSENDNSTTFIKPPLETASSSTPIPSSSSSGVL) are disordered. Polar residues predominate over residues 36–45 (LSENDNSTTF). The span at 54–68 (SSSTPIPSSSSSGVL) shows a compositional bias: low complexity. In terms of domain architecture, RRM 1 spans 79–158 (ACLFVASLNS…RHIRIERAKV (80 aa)). Residues 237–292 (YKKKGSSPFSPPNAHSRRRKSQGKDQSNTPVIKAPAPIPFSVSSDPPSTMGRSNSA) are disordered. Positions 277-292 (SVSSDPPSTMGRSNSA) are enriched in polar residues. Residues 365–441 (YSIFVGQLDP…KPLRVEFRQL (77 aa)) form the RRM 2 domain.

Its subcellular location is the cytoplasm. Functionally, negative regulator of sexual differentiation. Acts by repressing the transcription of meiosis-inducing, ste11-regulated genes. This chain is Multicopy suppressor of sporulation protein msa1 (msa1), found in Schizosaccharomyces pombe (strain 972 / ATCC 24843) (Fission yeast).